Reading from the N-terminus, the 126-residue chain is MLSRLLKCKIHRAVVTHAELHYEGSCAIDGVLMDLAGIREYEEIHVWNVTNGKRFTTYAIRGEDNSGIISVNGGAAHQADVGDLVIIATFGDFTEAEANAHKPRLVYANPDNTVNHTANCIPVQVA.

The active-site Schiff-base intermediate with substrate; via pyruvic acid is the Ser25. Residue Ser25 is modified to Pyruvic acid (Ser). Residue Thr57 participates in substrate binding. Catalysis depends on Tyr58, which acts as the Proton donor. 73–75 (GGA) contributes to the substrate binding site.

This sequence belongs to the PanD family. Heterooctamer of four alpha and four beta subunits. Pyruvate is required as a cofactor. Is synthesized initially as an inactive proenzyme, which is activated by self-cleavage at a specific serine bond to produce a beta-subunit with a hydroxyl group at its C-terminus and an alpha-subunit with a pyruvoyl group at its N-terminus.

It is found in the cytoplasm. It carries out the reaction L-aspartate + H(+) = beta-alanine + CO2. Its pathway is cofactor biosynthesis; (R)-pantothenate biosynthesis; beta-alanine from L-aspartate: step 1/1. Functionally, catalyzes the pyruvoyl-dependent decarboxylation of aspartate to produce beta-alanine. This is Aspartate 1-decarboxylase from Acinetobacter baumannii (strain ACICU).